We begin with the raw amino-acid sequence, 748 residues long: Polyribonucleotide nucleotidyltransferase (748 aa).

The Mg(2+) site is built by Asp-487 and Asp-493. The 60-residue stretch at 554–613 (PSTTTIKIDKDKIRDIIGPGGKVIKEICETSGAKIDISDDGTVSVYASDRDKLKVALDKI) folds into the KH domain. An S1 motif domain is found at 623–691 (GEIFNGTVVK…NKGKAKLTIK (69 aa)). Positions 691-748 (KNADKDKSSNNTKPKTNVNNTKDNSEPEQRRDSSKKRAWNEDNNAETAEVITERKYFN) are disordered. Positions 699–712 (SNNTKPKTNVNNTK) are enriched in low complexity. Residues 713–722 (DNSEPEQRRD) show a composition bias toward basic and acidic residues.

It belongs to the polyribonucleotide nucleotidyltransferase family. Mg(2+) serves as cofactor.

It localises to the cytoplasm. It carries out the reaction RNA(n+1) + phosphate = RNA(n) + a ribonucleoside 5'-diphosphate. Involved in mRNA degradation. Catalyzes the phosphorolysis of single-stranded polyribonucleotides processively in the 3'- to 5'-direction. This Rickettsia africae (strain ESF-5) protein is Polyribonucleotide nucleotidyltransferase.